We begin with the raw amino-acid sequence, 700 residues long: Centrosomal protein of 63 kDa (700 aa).

M1 carries the post-translational modification N-acetylmethionine. Coiled coils occupy residues 73 to 283 (KEVG…ETFI) and 343 to 533 (LQAE…MCKK). 3 positions are modified to phosphoserine: S278, K488, and L492. The segment at 570–603 (QYKTGHHSPRGQTLDSIDPVARGPSPLSSHISPG) is disordered. The span at 593-603 (PSPLSSHISPG) shows a compositional bias: low complexity.

It belongs to the CEP63 family. Interacts with CEP152 and CDK1; these interactions recruit both ligands to centrosomes. Interacts with CDK2, CDK5RAP2, WDR62, CEP90, KIAA0753/moonraker and CCDC14. CEP63, CDK5RAP2, CEP152, WDR62 are proposed to form a stepwise assembled complex at the centrosome forming a ring near parental centrioles. Interacts with CCDC57; the interaction is required for their location to proximal end of centrioles. Interacts with FXR1; promoting its stabilization. In terms of processing, polyubiquitinated via 'Lys-48'-linked ubiquitin, leading to its degradation. Deubiquitinated by USP36, promoting its stabilization.

It localises to the cytoplasm. The protein resides in the cytoskeleton. It is found in the microtubule organizing center. Its subcellular location is the centrosome. The protein localises to the centriole. It localises to the centriolar satellite. Its function is as follows. Required for normal spindle assembly. Plays a key role in mother-centriole-dependent centriole duplication; the function also seems to involve CEP152, CDK5RAP2 and WDR62 through a stepwise assembled complex at the centrosome that recruits CDK2 required for centriole duplication. Reported to be required for centrosomal recruitment of CEP152; however, this function has been questioned. Also recruits CDK1 to centrosomes. Plays a role in DNA damage response. Following DNA damage, such as double-strand breaks (DSBs), is removed from centrosomes; this leads to the inactivation of spindle assembly and delay in mitotic progression. Promotes stabilization of FXR1 protein by inhibiting FXR1 ubiquitination. This Mus musculus (Mouse) protein is Centrosomal protein of 63 kDa.